The primary structure comprises 246 residues: Serine protease 1 (246 aa).

The N-terminal stretch at 1–15 is a signal peptide; the sequence is MKTFIFLALLGATVA. Positions 16–23 are cleaved as a propeptide — activation peptide; it reads FPIDDDDK. Positions 24–244 constitute a Peptidase S1 domain; the sequence is IVGGYTCSRN…YVSWIQQTIA (221 aa). Intrachain disulfides connect Cys30–Cys160, Cys48–Cys64, Cys132–Cys233, Cys139–Cys206, Cys171–Cys185, and Cys196–Cys220. His63 acts as the Charge relay system in catalysis. Positions 75, 77, 80, and 85 each coordinate Ca(2+). Asp107 serves as the catalytic Charge relay system. Catalysis depends on Ser200, which acts as the Charge relay system.

Belongs to the peptidase S1 family. As to quaternary structure, interacts with SERPINA1. Requires Ca(2+) as cofactor.

The protein resides in the secreted. It is found in the extracellular space. The catalysed reaction is Preferential cleavage: Arg-|-Xaa, Lys-|-Xaa.. The chain is Serine protease 1 from Canis lupus familiaris (Dog).